The sequence spans 755 residues: Large structural phosphoprotein (755 aa).

2 disordered regions span residues 312 to 333 (ESSS…IKTE) and 522 to 555 (QSFD…STKT). Over residues 535-555 (PQDQKSIKQKNGNKANSSTKT) the composition is skewed to polar residues.

Belongs to the herpesviridae large structural phosphoprotein family. Post-translationally, phosphorylated at multiple sites.

It localises to the virion tegument. This Homo sapiens (Human) protein is Large structural phosphoprotein (U11).